The chain runs to 549 residues: Probable protein kinase UbiB (549 aa).

In terms of domain architecture, Protein kinase spans 123 to 501 (DFDDVPLASA…QHKAHKSNYL (379 aa)). ATP-binding positions include 129–137 (LASASIAQV) and K152. D287 acts as the Proton acceptor in catalysis. Transmembrane regions (helical) follow at residues 498–517 (SNYL…ILFT) and 521–540 (TLWA…LLGW).

The protein belongs to the ABC1 family. UbiB subfamily.

The protein resides in the cell inner membrane. Its pathway is cofactor biosynthesis; ubiquinone biosynthesis [regulation]. In terms of biological role, is probably a protein kinase regulator of UbiI activity which is involved in aerobic coenzyme Q (ubiquinone) biosynthesis. The protein is Probable protein kinase UbiB of Shewanella denitrificans (strain OS217 / ATCC BAA-1090 / DSM 15013).